The primary structure comprises 297 residues: F-box only protein 2 (297 aa).

The segment at 1–42 is disordered; the sequence is MDGDGDPESVGQPEEASPEEQQEEACAEEANGGEERPEDDGE. Residues 16–27 are compositionally biased toward acidic residues; it reads ASPEEQQEEACA. The F-box domain occupies 45 to 92; it reads AAYLDELPEPLLLRVLAELPAAQLVQACRLVCLRWKELVDGAPLWLLK. The region spanning 114–297 is the FBA domain; that stretch reads FYFLSKRRRN…VTNSSVWVEP (184 aa). Residues 211–213 and 279–280 contribute to the a carbohydrate site; these read RRD and YW.

In terms of assembly, component of the SCF(FBXO2) complex consisting of CUL1, RBX1, SKP1 and FBXO2. Predominantly detected as heterodimer with SKP1; the heterodimer with SKP1 is not part of the SCF(FBXO2) complex.

It is found in the cytoplasm. The protein resides in the microsome membrane. Its pathway is protein modification; protein ubiquitination. Functionally, substrate recognition component of a SCF (SKP1-CUL1-F-box protein) E3 ubiquitin-protein ligase complex that mediates the ubiquitination and subsequent proteasomal degradation of target proteins. Involved in the endoplasmic reticulum-associated degradation pathway (ERAD) for misfolded lumenal proteins by recognizing and binding sugar chains on unfolded glycoproteins that are retrotranslocated into the cytosol and promoting their ubiquitination and subsequent degradation. Prevents formation of cytosolic aggregates of unfolded glycoproteins that have been retrotranslocated into the cytosol. Able to recognize and bind denatured glycoproteins, preferentially those of the high-mannose type. The sequence is that of F-box only protein 2 (FBXO2) from Bos taurus (Bovine).